Here is a 360-residue protein sequence, read N- to C-terminus: Histidinol-phosphate aminotransferase (360 aa).

Lys222 carries the post-translational modification N6-(pyridoxal phosphate)lysine.

This sequence belongs to the class-II pyridoxal-phosphate-dependent aminotransferase family. Histidinol-phosphate aminotransferase subfamily. In terms of assembly, homodimer. It depends on pyridoxal 5'-phosphate as a cofactor.

It catalyses the reaction L-histidinol phosphate + 2-oxoglutarate = 3-(imidazol-4-yl)-2-oxopropyl phosphate + L-glutamate. It participates in amino-acid biosynthesis; L-histidine biosynthesis; L-histidine from 5-phospho-alpha-D-ribose 1-diphosphate: step 7/9. This Listeria welshimeri serovar 6b (strain ATCC 35897 / DSM 20650 / CCUG 15529 / CIP 8149 / NCTC 11857 / SLCC 5334 / V8) protein is Histidinol-phosphate aminotransferase.